A 331-amino-acid polypeptide reads, in one-letter code: DNA polymerase III subunit delta (331 aa).

It belongs to the DNA polymerase HolA subunit family. DNA polymerase III contains a core (composed of alpha, epsilon and theta chains) that associates with a tau subunit. This core dimerizes to form the POLIII' complex. PolIII' associates with the gamma complex (composed of gamma, delta, delta', psi and chi chains) and with the beta chain to form the complete DNA polymerase III complex.

The enzyme catalyses DNA(n) + a 2'-deoxyribonucleoside 5'-triphosphate = DNA(n+1) + diphosphate. Functionally, DNA polymerase III is a complex, multichain enzyme responsible for most of the replicative synthesis in bacteria. This DNA polymerase also exhibits 3' to 5' exonuclease activity. The delta subunit seems to interact with the gamma subunit to transfer the beta subunit on the DNA. The sequence is that of DNA polymerase III subunit delta (holA) from Buchnera aphidicola subsp. Acyrthosiphon pisum (strain APS) (Acyrthosiphon pisum symbiotic bacterium).